The following is a 164-amino-acid chain: Thiol peroxidase (164 aa).

Positions Ile-18 to Asn-163 constitute a Thioredoxin domain. Catalysis depends on Cys-60, which acts as the Cysteine sulfenic acid (-SOH) intermediate. Cys-60 and Cys-93 are joined by a disulfide.

The protein belongs to the peroxiredoxin family. Tpx subfamily. As to quaternary structure, homodimer.

The enzyme catalyses a hydroperoxide + [thioredoxin]-dithiol = an alcohol + [thioredoxin]-disulfide + H2O. Its function is as follows. Thiol-specific peroxidase that catalyzes the reduction of hydrogen peroxide and organic hydroperoxides to water and alcohols, respectively. Plays a role in cell protection against oxidative stress by detoxifying peroxides. In Staphylococcus aureus (strain COL), this protein is Thiol peroxidase.